Consider the following 443-residue polypeptide: Serine/threonine-protein phosphatase 2A 55 kDa regulatory subunit B beta isoform (443 aa).

WD repeat units follow at residues 22 to 61 (TEAD…KNQV), 87 to 128 (EIEE…KRPE), 171 to 209 (AHTY…QSFN), and 220 to 260 (ELTE…CVTG). At Ser275 the chain carries Phosphoserine. 3 WD repeats span residues 279–317 (KLSS…RPIE), 334–375 (ENDC…DVTL), and 410–442 (DFSK…QDKV). Thr298 carries the post-translational modification Phosphothreonine.

Belongs to the phosphatase 2A regulatory subunit B family. PP2A consists of a common heterodimeric core enzyme, composed of a 36 kDa catalytic subunit (subunit C) and a 65 kDa constant regulatory subunit (PR65 or subunit A), that associates with a variety of regulatory subunits. Proteins that associate with the core dimer include three families of regulatory subunits B (the R2/B/PR55/B55, R3/B''/PR72/PR130/PR59 and R5/B'/B56 families), the 48 kDa variable regulatory subunit, viral proteins, and cell signaling molecules. Interacts with TOMM22. Interacts with IER5 (via N- and C-terminal regions). Brain.

It is found in the cytoplasm. Its subcellular location is the cytoskeleton. The protein localises to the membrane. The B regulatory subunit might modulate substrate selectivity and catalytic activity, and might also direct the localization of the catalytic enzyme to a particular subcellular compartment. In Sus scrofa (Pig), this protein is Serine/threonine-protein phosphatase 2A 55 kDa regulatory subunit B beta isoform (PPP2R2B).